The primary structure comprises 67 residues: Large ribosomal subunit protein uL30 (67 aa).

The protein belongs to the universal ribosomal protein uL30 family. As to quaternary structure, part of the 50S ribosomal subunit.

The protein is Large ribosomal subunit protein uL30 of Sinorhizobium medicae (strain WSM419) (Ensifer medicae).